Consider the following 198-residue polypeptide: Succinate dehydrogenase [ubiquinone] cytochrome b subunit, mitochondrial (198 aa).

A mitochondrion-targeting transit peptide spans 1 to 50 (MSAMMVKLGLNKSALLLKPSAFSRAAALSSSRRLLFNTARTNFLSTSPLK). Over 51-99 (NVASEMNTKAAIAEEQILNKQRAKRPISPHLTIYQPQLTWYLSSLHRIS) the chain is Mitochondrial matrix. Residues Ser93 and Arg97 each coordinate a ubiquinone. The chain crosses the membrane as a helical span at residues 100–120 (LVLMGLGFYLFTILFGVSGLL). At 121–139 (GLGLTTEKVSNWYHQKFSK) the chain is on the mitochondrial intermembrane side. Residues 140 to 160 (ITEWSIKGSFAYLFAIHYGGA) traverse the membrane as a helical segment. His156 is a heme binding site. The Mitochondrial matrix portion of the chain corresponds to 161 to 175 (IRHLIWDTAKELTLK). A helical transmembrane segment spans residues 176-196 (GVYRTGYALIGFTAVLGTYLL). The Mitochondrial intermembrane segment spans residues 197–198 (TL).

The protein belongs to the cytochrome b560 family. In terms of assembly, forms part of complex II containing four subunits: a flavoprotein (FP), an iron-sulfur protein (IP) and a cytochrome b composed of two integral membrane proteins. The cofactor is heme.

Its subcellular location is the mitochondrion inner membrane. The protein operates within carbohydrate metabolism; tricarboxylic acid cycle. Functionally, membrane-anchoring mono-heme cytochrome b subunit of succinate dehydrogenase (SDH) that is involved in system II of the mitochondrial electron transport chain and is responsible for transferring electrons from succinate to ubiquinone (coenzyme Q). SDH3 and SDH4 form the membrane dimer that anchors the catalytic dimer formed by SDH1 and SDH2 to the matrix surface of the mitochondrial inner membrane. Electrons originating from the catalytic dimer enter the membrane dimer for ubiquinone reduction. In Saccharomyces cerevisiae (strain ATCC 204508 / S288c) (Baker's yeast), this protein is Succinate dehydrogenase [ubiquinone] cytochrome b subunit, mitochondrial (SDH3).